The following is a 427-amino-acid chain: 3-phosphoshikimate 1-carboxyvinyltransferase (427 aa).

Positions 22, 23, and 27 each coordinate 3-phosphoshikimate. Lysine 22 contributes to the phosphoenolpyruvate binding site. Residues glycine 96 and arginine 124 each contribute to the phosphoenolpyruvate site. 3-phosphoshikimate-binding residues include serine 169, serine 170, glutamine 171, serine 197, aspartate 313, asparagine 336, and lysine 340. Position 171 (glutamine 171) interacts with phosphoenolpyruvate. The active-site Proton acceptor is the aspartate 313. Phosphoenolpyruvate is bound by residues arginine 344, arginine 386, and lysine 411.

This sequence belongs to the EPSP synthase family. In terms of assembly, monomer.

The protein resides in the cytoplasm. It catalyses the reaction 3-phosphoshikimate + phosphoenolpyruvate = 5-O-(1-carboxyvinyl)-3-phosphoshikimate + phosphate. It functions in the pathway metabolic intermediate biosynthesis; chorismate biosynthesis; chorismate from D-erythrose 4-phosphate and phosphoenolpyruvate: step 6/7. Its function is as follows. Catalyzes the transfer of the enolpyruvyl moiety of phosphoenolpyruvate (PEP) to the 5-hydroxyl of shikimate-3-phosphate (S3P) to produce enolpyruvyl shikimate-3-phosphate and inorganic phosphate. This is 3-phosphoshikimate 1-carboxyvinyltransferase from Shigella dysenteriae.